The following is a 298-amino-acid chain: Aspartate carbamoyltransferase catalytic subunit (298 aa).

Residues Arg50 and Thr51 each coordinate carbamoyl phosphate. Lys79 is an L-aspartate binding site. Carbamoyl phosphate-binding residues include Arg100, His128, and Gln131. Positions 160 and 221 each coordinate L-aspartate. Carbamoyl phosphate contacts are provided by Leu260 and Pro261.

The protein belongs to the aspartate/ornithine carbamoyltransferase superfamily. ATCase family. Heterooligomer of catalytic and regulatory chains.

It carries out the reaction carbamoyl phosphate + L-aspartate = N-carbamoyl-L-aspartate + phosphate + H(+). It participates in pyrimidine metabolism; UMP biosynthesis via de novo pathway; (S)-dihydroorotate from bicarbonate: step 2/3. Its function is as follows. Catalyzes the condensation of carbamoyl phosphate and aspartate to form carbamoyl aspartate and inorganic phosphate, the committed step in the de novo pyrimidine nucleotide biosynthesis pathway. This Methanoculleus marisnigri (strain ATCC 35101 / DSM 1498 / JR1) protein is Aspartate carbamoyltransferase catalytic subunit.